Reading from the N-terminus, the 203-residue chain is GTP-binding protein YPTM2 (203 aa).

GTP contacts are provided by residues 15-23 (GDSGVGKSC), 33-40 (YLDSYIST), 63-67 (DTAGQ), 121-124 (NKSD), and 151-153 (SAK). An Effector region motif is present at residues 37–45 (YISTIGVDF). Residues Cys-200 and Cys-201 are each lipidated (S-geranylgeranyl cysteine).

It belongs to the small GTPase superfamily. Rab family. As to expression, its expression is weak in stems, higher in roots, leaves and coleoptiles, but highest in flowers.

It localises to the cell membrane. Protein transport. Probably involved in vesicular traffic. The polypeptide is GTP-binding protein YPTM2 (YPTM2) (Zea mays (Maize)).